The chain runs to 211 residues: ATP phosphoribosyltransferase (211 aa).

Belongs to the ATP phosphoribosyltransferase family. Short subfamily. As to quaternary structure, heteromultimer composed of HisG and HisZ subunits.

It is found in the cytoplasm. It carries out the reaction 1-(5-phospho-beta-D-ribosyl)-ATP + diphosphate = 5-phospho-alpha-D-ribose 1-diphosphate + ATP. It functions in the pathway amino-acid biosynthesis; L-histidine biosynthesis; L-histidine from 5-phospho-alpha-D-ribose 1-diphosphate: step 1/9. In terms of biological role, catalyzes the condensation of ATP and 5-phosphoribose 1-diphosphate to form N'-(5'-phosphoribosyl)-ATP (PR-ATP). Has a crucial role in the pathway because the rate of histidine biosynthesis seems to be controlled primarily by regulation of HisG enzymatic activity. The protein is ATP phosphoribosyltransferase of Pseudomonas putida (strain ATCC 47054 / DSM 6125 / CFBP 8728 / NCIMB 11950 / KT2440).